The primary structure comprises 253 residues: Imidazole glycerol phosphate synthase subunit HisF (253 aa).

Catalysis depends on residues Asp11 and Asp130.

It belongs to the HisA/HisF family. As to quaternary structure, heterodimer of HisH and HisF.

It localises to the cytoplasm. It catalyses the reaction 5-[(5-phospho-1-deoxy-D-ribulos-1-ylimino)methylamino]-1-(5-phospho-beta-D-ribosyl)imidazole-4-carboxamide + L-glutamine = D-erythro-1-(imidazol-4-yl)glycerol 3-phosphate + 5-amino-1-(5-phospho-beta-D-ribosyl)imidazole-4-carboxamide + L-glutamate + H(+). It participates in amino-acid biosynthesis; L-histidine biosynthesis; L-histidine from 5-phospho-alpha-D-ribose 1-diphosphate: step 5/9. Functionally, IGPS catalyzes the conversion of PRFAR and glutamine to IGP, AICAR and glutamate. The HisF subunit catalyzes the cyclization activity that produces IGP and AICAR from PRFAR using the ammonia provided by the HisH subunit. In Geobacter sulfurreducens (strain ATCC 51573 / DSM 12127 / PCA), this protein is Imidazole glycerol phosphate synthase subunit HisF.